Consider the following 284-residue polypeptide: Acetylglutamate kinase (284 aa).

Residues 66–67 (GG), Arg88, and Asn179 contribute to the substrate site.

It belongs to the acetylglutamate kinase family. ArgB subfamily.

It is found in the cytoplasm. The enzyme catalyses N-acetyl-L-glutamate + ATP = N-acetyl-L-glutamyl 5-phosphate + ADP. The protein operates within amino-acid biosynthesis; L-arginine biosynthesis; N(2)-acetyl-L-ornithine from L-glutamate: step 2/4. In terms of biological role, catalyzes the ATP-dependent phosphorylation of N-acetyl-L-glutamate. The sequence is that of Acetylglutamate kinase from Actinobacillus pleuropneumoniae serotype 3 (strain JL03).